A 678-amino-acid chain; its full sequence is Endoplasmic reticulum membrane-associated RNA degradation protein (678 aa).

A run of 2 helical transmembrane segments spans residues 390–410 (LLAF…LSVF) and 587–607 (VLSL…AVCG).

Its subcellular location is the endoplasmic reticulum membrane. In terms of biological role, may play a role in neuronal migration during embryonic development. The sequence is that of Endoplasmic reticulum membrane-associated RNA degradation protein (ERMARD) from Homo sapiens (Human).